The primary structure comprises 270 residues: UPF0162 protein PA3419 (270 aa).

The protein belongs to the UPF0162 family.

The sequence is that of UPF0162 protein PA3419 from Pseudomonas aeruginosa (strain ATCC 15692 / DSM 22644 / CIP 104116 / JCM 14847 / LMG 12228 / 1C / PRS 101 / PAO1).